Consider the following 441-residue polypeptide: Zinc finger protein ZIC 3 (441 aa).

The C2H2-type 1; atypical zinc-finger motif lies at 222-257; that stretch reads LSCKWLEESPMNRPQKTCDRTFSSMHELVTHMTMEH. The segment at 266–293 adopts a C2H2-type 2; atypical zinc-finger fold; sequence HICYWEECPRGGKSFKAKYKLVNHIRVH. C2H2-type zinc fingers lie at residues 299-323, 329-353, and 359-381; these read FPCP…KRTH, FKCE…MHVH, and YICK…MKVH. Residues 375–441 are disordered; the sequence is RKHMKVHESQ…LPPNFNEWYV (67 aa). Over residues 383 to 399 the composition is skewed to low complexity; it reads SQGSDSSPAASSGYESA. Polar residues predominate over residues 406–429; sequence SANSEEPSKNSSATHQTNNSSHNT.

The protein belongs to the GLI C2H2-type zinc-finger protein family.

The protein resides in the nucleus. It localises to the cytoplasm. In terms of biological role, probably acts as a transcriptional activator. May bind to the minimal GLI-consensus sequence 5'-GGGTGGTC-3'. Can determine the ectodermal cell fate and promote the earliest step of neural and neural crest development. Involved in establishing left-right asymmetry in the embryo. The sequence is that of Zinc finger protein ZIC 3 (zic3) from Xenopus tropicalis (Western clawed frog).